The sequence spans 142 residues: Large ribosomal subunit protein uL22c (142 aa).

This sequence belongs to the universal ribosomal protein uL22 family. As to quaternary structure, part of the 50S ribosomal subunit.

It is found in the plastid. Its subcellular location is the chloroplast. This protein binds specifically to 23S rRNA. Its function is as follows. The globular domain of the protein is located near the polypeptide exit tunnel on the outside of the subunit, while an extended beta-hairpin is found that lines the wall of the exit tunnel in the center of the 70S ribosome. This chain is Large ribosomal subunit protein uL22c (rpl22), found in Ceratophyllum demersum (Rigid hornwort).